A 187-amino-acid chain; its full sequence is Calmodulin-like protein 1 (187 aa).

An N-acetylalanine modification is found at alanine 2. EF-hand domains lie at 8–43 (EQIVEFREAFSLFDKDGDGSITTKELGTVMRSLGQN), 44–79 (PTEAELQDMISEVDADSNGNIEFKEFLGLMARKLRD), 81–116 (DSEEELKEAFRVFDKDQNGFISAAELRHVMANIGER), and 117–152 (LTDEEVGEMISEADVDGDGQINYEEFVKCMMAKKRR). Ca(2+)-binding residues include aspartate 21, aspartate 23, aspartate 25, serine 27, glutamate 32, aspartate 57, aspartate 59, asparagine 61, asparagine 63, glutamate 68, aspartate 94, aspartate 96, asparagine 98, glutamate 105, aspartate 130, aspartate 132, aspartate 134, glutamine 136, and glutamate 141. The segment at 153–187 (KRIEEKREHDGGSRTKSAGPSAAPASKRGQKCVIL) is disordered. Residues 154 to 165 (RIEEKREHDGGS) show a composition bias toward basic and acidic residues. Over residues 169–178 (SAGPSAAPAS) the composition is skewed to low complexity. Cysteine methyl ester is present on cysteine 184. A lipid anchor (S-farnesyl cysteine) is attached at cysteine 184. The propeptide at 185–187 (VIL) is removed in mature form.

It belongs to the calmodulin family. Expressed in roots, etiolated shoots and flowers.

It localises to the membrane. Its function is as follows. Calcium-binding protein that binds and activates CAMK1, a calcium/calmodulin-dependent kinase. This Oryza sativa subsp. indica (Rice) protein is Calmodulin-like protein 1 (CML1).